Consider the following 283-residue polypeptide: Poly(3-hydroxyalkanoate) depolymerase (283 aa).

One can recognise an AB hydrolase-1 domain in the interval proline 30–threonine 253. Serine 102 functions as the Charge relay system in the catalytic mechanism.

The protein belongs to the AB hydrolase superfamily. Lipase family.

Functionally, complements a mutant that does not degrade PHA; might be a lipase. The sequence is that of Poly(3-hydroxyalkanoate) depolymerase from Ectopseudomonas oleovorans (Pseudomonas oleovorans).